The chain runs to 355 residues: Methyltransferase FUS9 (355 aa).

Positions 18, 63, 86, 123, and 124 each coordinate S-adenosyl-L-homocysteine. Phe-231 serves as a coordination point for Mg(2+).

Belongs to the methyltransferase superfamily. Type-7 methyltransferase family. The cofactor is Mg(2+).

The protein operates within mycotoxin biosynthesis. Functionally, methyltransferase; part of the gene cluster that mediates the biosynthesis of the mycotoxin fusarin C. Within the cluster, FUS1, FUS2, FUS8 and FUS9 are sufficient for fusarin production. The roles of the other FUS members are yet undetermined. The fusarin C synthetase FUS1 is responsible for the condensation of one acetyl-coenzyme A (CoA) unit with six malonyl-CoA units and the amide linkage of the arising heptaketide and homoserine, subsequently releasing the first intermediate, prefusarin, as an alcohol with an open ring structure. The cytochrome P450 monooxygenase FUS8 participates in multiple oxidation processes at carbon C-20 and is able to use the FUS1 product as substrate, resulting in formation of 20-hydroxy-prefusarin. This reaction seems to be essential before the 2-pyrrolidone ring closure can be catalyzed by FUS2, generating 20-hydroxy-fusarin. FUS8 is able to further oxidizes carbon C-20 after ring closure, resulting in the formation of carboxy-fusarin C. As the last step, FUS9 methylates the hydroxyl group at C-21 to generate fusarin C. Fusarin C can then rearrange to epi-fusarin C, the (z)-isomers, and fusarin A and fusarin D. The protein is Methyltransferase FUS9 of Gibberella moniliformis (strain M3125 / FGSC 7600) (Maize ear and stalk rot fungus).